A 187-amino-acid chain; its full sequence is Protein dj-1beta (187 aa).

Residue C45 is modified to Cysteine sulfinic acid (-SO2H). C104 serves as the catalytic Nucleophile. Position 104 is a cysteine sulfinic acid (-SO2H); alternate (C104).

Post-translationally, oxidation of Cys-45 and Cys-104 in response to oxidative stress. Levels of oxidation increase with age. Expressed in the head and testis (at protein level). Ubiquitously expressed at constant levels.

It is found in the mitochondrion. The protein resides in the cytoplasm. It localises to the nucleus. Functionally, plays an important role in cell protection against oxidative stress and cell death by acting as a oxidative stress sensor. Does not play a role in methylglyoxal detoxification. Plays a role in mitochondrial function together with Pink1. In motor neurons regulates structural synaptic plasticity of locomotor behavior as part of the PTEN-phosphatidylinositol 3-kinase pathway in response to oxygen species (ROS) levels. The sequence is that of Protein dj-1beta from Drosophila melanogaster (Fruit fly).